A 363-amino-acid polypeptide reads, in one-letter code: Protein Wnt-5b (363 aa).

The first 21 residues, 1–21 (MDVRMNQGHLLLAVTLIVCNS), serve as a signal peptide directing secretion. Cys87 and Cys98 form a disulfide bridge. Asn97 and Asn103 each carry an N-linked (GlcNAc...) asparagine glycan. Intrachain disulfides connect Cys137-Cys145, Cys147-Cys165, Cys221-Cys235, Cys223-Cys230, Cys292-Cys323, Cys308-Cys318, Cys322-Cys362, Cys338-Cys353, Cys340-Cys350, and Cys345-Cys346. The O-palmitoleoyl serine; by PORCN moiety is linked to residue Ser227. N-linked (GlcNAc...) asparagine glycosylation is found at Asn295 and Asn309.

It belongs to the Wnt family. Palmitoleoylation is required for efficient binding to frizzled receptors. Depalmitoleoylation leads to Wnt signaling pathway inhibition.

It is found in the secreted. The protein resides in the extracellular space. It localises to the extracellular matrix. In terms of biological role, ligand for members of the frizzled family of seven transmembrane receptors. Can activate or inhibit canonical Wnt signaling, depending on receptor context. Required during embryogenesis for extension of the primary anterior-posterior axis. Regulates convergent extension movements and hypaxial myogenesis during gastrulation via activation of non-canonical Wnt signaling. This Danio rerio (Zebrafish) protein is Protein Wnt-5b (wnt5b).